We begin with the raw amino-acid sequence, 396 residues long: Smad nuclear-interacting protein 1 (396 aa).

Over residues 1 to 10 (MKAVKSERER) the composition is skewed to basic and acidic residues. The tract at residues 1–227 (MKAVKSERER…VPAKEKPSFE (227 aa)) is disordered. A Glycyl lysine isopeptide (Lys-Gly) (interchain with G-Cter in SUMO); alternate cross-link involves residue Lys30. Lys30 participates in a covalent cross-link: Glycyl lysine isopeptide (Lys-Gly) (interchain with G-Cter in SUMO1); alternate. A Glycyl lysine isopeptide (Lys-Gly) (interchain with G-Cter in SUMO2); alternate cross-link involves residue Lys30. 4 positions are modified to phosphoserine: Ser35, Ser49, Ser52, and Ser54. Thr57 carries the phosphothreonine modification. Residues Ser58 and Ser99 each carry the phosphoserine modification. The span at 77-105 (PPKKKNKASGRRSKSPRSKRNRSPHHSTV) shows a compositional bias: basic residues. The segment covering 107–142 (VKQEREDHPRRGREDRQHREPSEQEHRRARNSDRDR) has biased composition (basic and acidic residues). A Glycyl lysine isopeptide (Lys-Gly) (interchain with G-Cter in SUMO2) cross-link involves residue Lys108. Ser153 is modified (phosphoserine). Residues 165–196 (RDRDTQNLQAQEEEREFYNARRREHRQRNDVG) adopt a coiled-coil conformation. At Ser202 the chain carries Phosphoserine. Positions 213-225 (NKEKEVPAKEKPS) are enriched in basic and acidic residues. Lys223 is covalently cross-linked (Glycyl lysine isopeptide (Lys-Gly) (interchain with G-Cter in SUMO2)). Positions 281–344 (YLLGRHRRIA…NGTFLNNKRI (64 aa)) constitute an FHA domain. The segment covering 373-382 (SSDTSEIDRK) has biased composition (basic and acidic residues). The segment at 373-396 (SSDTSEIDRKDDEDEEEEEEVSDS) is disordered. Acidic residues predominate over residues 383–396 (DDEDEEEEEEVSDS). Phosphoserine is present on Ser394.

In terms of assembly, component of activated spliceosome complexes. Component of the minor spliceosome, which splices U12-type introns. Binds SMAD4 and CREBBP/EP300. Binds the SMAD1/OAZ1/PSMB4 complex. Interacts with DROSHA and SMARCA4. Component of the SNARP complex which consists at least of SNIP1, SNW1, THRAP3, BCLAF1 and PNN. Post-translationally, degraded by the proteasome upon binding to the SMAD1/OAZ1/PSMB4 complex. As to expression, ubiquitous, with highest expression in heart and skeletal muscle.

Its subcellular location is the nucleus. In terms of biological role, required for pre-mRNA splicing as component of the spliceosome. As a component of the minor spliceosome, involved in the splicing of U12-type introns in pre-mRNAs. Down-regulates NF-kappa-B signaling by competing with RELA for CREBBP/EP300 binding. Involved in the microRNA (miRNA) biogenesis. May be involved in cyclin-D1/CCND1 mRNA stability through the SNARP complex which associates with both the 3'end of the CCND1 gene and its mRNA. This chain is Smad nuclear-interacting protein 1 (SNIP1), found in Homo sapiens (Human).